The following is a 538-amino-acid chain: Phosphoenolpyruvate carboxykinase (ATP) (538 aa).

Position 64 (Arg64) interacts with substrate. Asn149 and Phe151 together coordinate Ca(2+). Substrate is bound by residues Tyr206 and Lys212. Residues Lys212, His231, and 247–255 contribute to the ATP site; that span reads GLSGTGKTT. Residues Lys212 and His231 each coordinate Mn(2+). Asp268 contacts Mn(2+). Residues Glu296, Arg332, 447 to 448, and Thr453 each bind ATP; that span reads RI. Arg332 provides a ligand contact to substrate.

Belongs to the phosphoenolpyruvate carboxykinase (ATP) family. Monomer. It depends on Mn(2+) as a cofactor.

The protein localises to the cytoplasm. It carries out the reaction oxaloacetate + ATP = phosphoenolpyruvate + ADP + CO2. It participates in carbohydrate biosynthesis; gluconeogenesis. Allosterically activated by calcium. In terms of biological role, involved in the gluconeogenesis. Catalyzes the conversion of oxaloacetate (OAA) to phosphoenolpyruvate (PEP) through direct phosphoryl transfer between the nucleoside triphosphate and OAA. This chain is Phosphoenolpyruvate carboxykinase (ATP), found in Salmonella typhimurium (strain LT2 / SGSC1412 / ATCC 700720).